A 114-amino-acid chain; its full sequence is uncharacterized protein (114 aa).

Over residues 1 to 20 (MGLSRWHDKNSRPAEEKSEE) the composition is skewed to basic and acidic residues. The disordered stretch occupies residues 1-22 (MGLSRWHDKNSRPAEEKSEEMQ).

Its function is as follows. May be involved in phosphatase regulation and/or generation of precursor metabolites and energy. This is an uncharacterized protein from Saccharomyces cerevisiae (strain ATCC 204508 / S288c) (Baker's yeast).